A 39-amino-acid chain; its full sequence is Cytochrome b559 subunit beta (39 aa).

Residues 14-30 (WLAVHGLAVPTVFFLGS) traverse the membrane as a helical segment. Heme is bound at residue H18.

The protein belongs to the PsbE/PsbF family. Heterodimer of an alpha subunit and a beta subunit. PSII is composed of 1 copy each of membrane proteins PsbA, PsbB, PsbC, PsbD, PsbE, PsbF, PsbH, PsbI, PsbJ, PsbK, PsbL, PsbM, PsbT, PsbX, PsbY, PsbZ, Psb30/Ycf12, at least 3 peripheral proteins of the oxygen-evolving complex and a large number of cofactors. It forms dimeric complexes. The cofactor is heme b.

The protein localises to the plastid. The protein resides in the chloroplast thylakoid membrane. In terms of biological role, this b-type cytochrome is tightly associated with the reaction center of photosystem II (PSII). PSII is a light-driven water:plastoquinone oxidoreductase that uses light energy to abstract electrons from H(2)O, generating O(2) and a proton gradient subsequently used for ATP formation. It consists of a core antenna complex that captures photons, and an electron transfer chain that converts photonic excitation into a charge separation. This is Cytochrome b559 subunit beta from Adiantum capillus-veneris (Maidenhair fern).